Consider the following 266-residue polypeptide: Glutamate racemase (266 aa).

Substrate contacts are provided by residues 9 to 10 (DS) and 41 to 42 (YG). Catalysis depends on C72, which acts as the Proton donor/acceptor. Residue 73 to 74 (NT) coordinates substrate. The active-site Proton donor/acceptor is the C183. Substrate is bound at residue 184-185 (TH).

Belongs to the aspartate/glutamate racemases family.

It carries out the reaction L-glutamate = D-glutamate. The protein operates within cell wall biogenesis; peptidoglycan biosynthesis. Its function is as follows. Provides the (R)-glutamate required for cell wall biosynthesis. The chain is Glutamate racemase from Listeria monocytogenes serotype 4a (strain HCC23).